Here is an 855-residue protein sequence, read N- to C-terminus: Coiled-coil domain-containing protein 87 (855 aa).

2 disordered regions span residues 23 to 43 (LFPSKAKPPPEPPKRPSQDAT) and 278 to 302 (SRPSPMVPLPSHSPSSESHQFPTSP). The span at 287–296 (PSHSPSSESH) shows a compositional bias: low complexity. Coiled coils occupy residues 387-413 (TRRLTAQHHLEKLQQMIKSLQEEEASG) and 764-789 (RSYLQRKLNRMESNLVSLLERIESVF).

It belongs to the CCDC87 family. As to expression, specifically expressed in testis (at protein level). Not detected in other tissues tested (at protein level). In the testis, localizes to pachytene spermatocytes and spermatids.

Plays a role in spermatogenesis, where it is important for normal sperm head morphology. Also required for the acrosome reaction and thus normal male fertility. This Mus musculus (Mouse) protein is Coiled-coil domain-containing protein 87 (Ccdc87).